The chain runs to 706 residues: Amino-acid acetyltransferase, mitochondrial (706 aa).

Disordered regions lie at residues M1 to D25 and N367 to Q403. Residues M1–F35 constitute a mitochondrion transit peptide. Residues N367 to V388 are compositionally biased toward polar residues. The span at S389–A401 shows a compositional bias: low complexity. Residues T527–P696 form the N-acetyltransferase domain.

It belongs to the acetyltransferase family.

It localises to the mitochondrion. The catalysed reaction is L-glutamate + acetyl-CoA = N-acetyl-L-glutamate + CoA + H(+). The protein operates within amino-acid biosynthesis; L-arginine biosynthesis; N(2)-acetyl-L-ornithine from L-glutamate: step 1/4. Its function is as follows. N-acetylglutamate synthase involved in arginine biosynthesis. The chain is Amino-acid acetyltransferase, mitochondrial (arg2) from Emericella nidulans (strain FGSC A4 / ATCC 38163 / CBS 112.46 / NRRL 194 / M139) (Aspergillus nidulans).